The primary structure comprises 1339 residues: Receptor tyrosine-protein kinase erbB-3 (1339 aa).

The first 19 residues, 1-19, serve as a signal peptide directing secretion; the sequence is MSAIGTLQVLGFLLSLARG. Residues 20 to 641 lie on the Extracellular side of the membrane; that stretch reads SEMGNSQAVC…QAEVLMSKPH (622 aa). Residue Asn-126 is glycosylated (N-linked (GlcNAc...) asparagine). 11 disulfides stabilise this stretch: Cys-186-Cys-194, Cys-190-Cys-202, Cys-210-Cys-218, Cys-214-Cys-226, Cys-227-Cys-235, Cys-231-Cys-243, Cys-246-Cys-255, Cys-259-Cys-286, Cys-290-Cys-301, Cys-305-Cys-320, and Cys-323-Cys-327. Asn-250 is a glycosylation site (N-linked (GlcNAc...) asparagine). Asn-353, Asn-408, Asn-414, Asn-437, and Asn-469 each carry an N-linked (GlcNAc...) asparagine glycan. 10 disulfide bridges follow: Cys-500/Cys-509, Cys-504/Cys-517, Cys-520/Cys-529, Cys-533/Cys-549, Cys-552/Cys-565, Cys-556/Cys-573, Cys-576/Cys-585, Cys-589/Cys-610, Cys-613/Cys-621, and Cys-617/Cys-629. A glycan (N-linked (GlcNAc...) asparagine) is linked at Asn-522. An N-linked (GlcNAc...) asparagine glycan is attached at Asn-566. An N-linked (GlcNAc...) asparagine glycan is attached at Asn-616. Residues 642-662 traverse the membrane as a helical segment; sequence LVIAVTVGLTVIFLILGGSFL. Residues 663–1339 are Cytoplasmic-facing; that stretch reads YWRGRRIQNK…LFPKANAQRI (677 aa). Ser-684 is subject to Phosphoserine. A Protein kinase domain is found at 707–964; the sequence is LRKLKVLGSG…TFKELANEFT (258 aa). ATP contacts are provided by residues 713–721, Lys-740, 786–788, and 832–837; these read LGSGVFGTV, QYL, and DLALRN. The active-site Proton acceptor is Asp-832. Position 980 is a phosphoserine (Ser-980). 3 disordered regions span residues 1028-1052, 1077-1156, and 1181-1212; these read LSLP…SGYM, RPIS…GNGY, and SVLG…PRPG. Acidic residues predominate over residues 1185–1195; that stretch reads TEEEDEDEEYE.

It belongs to the protein kinase superfamily. Tyr protein kinase family. EGF receptor subfamily. Monomer and homodimer. Heterodimer with each of the other ERBB receptors (Potential). Interacts with CSPG5, PA2G4, GRB7 and MUC1. Interacts with MYOC. Found in a ternary complex with NRG1 and ITGAV:ITGB3 or ITGA6:ITGB4. In terms of processing, autophosphorylated. Ligand-binding increases phosphorylation on tyrosine residues and promotes its association with the p85 subunit of phosphatidylinositol 3-kinase. As to expression, in the muscle, expression localizes to the synaptic sites of muscle fibers.

It is found in the membrane. It catalyses the reaction L-tyrosyl-[protein] + ATP = O-phospho-L-tyrosyl-[protein] + ADP + H(+). Functionally, tyrosine-protein kinase that plays an essential role as cell surface receptor for neuregulins. Binds to neuregulin-1 (NRG1) and is activated by it; ligand-binding increases phosphorylation on tyrosine residues and promotes its association with the p85 subunit of phosphatidylinositol 3-kinase. May also be activated by CSPG5. Involved in the regulation of myeloid cell differentiation. In Mus musculus (Mouse), this protein is Receptor tyrosine-protein kinase erbB-3 (Erbb3).